The primary structure comprises 508 residues: Pyruvate kinase (508 aa).

R56 lines the substrate pocket. Positions 58, 60, 90, and 91 each coordinate K(+). 58 to 61 contacts ATP; sequence NFSH. R97 and K185 together coordinate ATP. Position 251 (E251) interacts with Mg(2+). Substrate is bound by residues G274, D275, and T307. Mg(2+) is bound at residue D275.

It belongs to the pyruvate kinase family. Homotetramer. Requires Mg(2+) as cofactor. K(+) is required as a cofactor.

It catalyses the reaction pyruvate + ATP = phosphoenolpyruvate + ADP + H(+). The protein operates within carbohydrate degradation; glycolysis; pyruvate from D-glyceraldehyde 3-phosphate: step 5/5. With respect to regulation, regulated by phosphoenolpyruvate substrate and is allosterically activated by ribose-5-phosphate, AMP and other nucleoside monophosphates but not by fructose-1,6-bisphosphate. The polypeptide is Pyruvate kinase (pyk) (Mycoplasma genitalium (strain ATCC 33530 / DSM 19775 / NCTC 10195 / G37) (Mycoplasmoides genitalium)).